The primary structure comprises 308 residues: Acetyl-coenzyme A carboxylase carboxyl transferase subunit beta 1 (308 aa).

Residues 25 to 294 (VWTKCTSCEQ…PMVVSVNESP (270 aa)) form the CoA carboxyltransferase N-terminal domain. 4 residues coordinate Zn(2+): Cys-29, Cys-32, Cys-48, and Cys-51. A C4-type zinc finger spans residues 29–51 (CTSCEQVLYHAELERNLEVCPKC). Positions 289 to 308 (SVNESPNEEPYSVPEADEKG) are disordered.

The protein belongs to the AccD/PCCB family. As to quaternary structure, acetyl-CoA carboxylase is a heterohexamer composed of biotin carboxyl carrier protein (AccB), biotin carboxylase (AccC) and two subunits each of ACCase subunit alpha (AccA) and ACCase subunit beta (AccD). Requires Zn(2+) as cofactor.

It is found in the cytoplasm. It catalyses the reaction N(6)-carboxybiotinyl-L-lysyl-[protein] + acetyl-CoA = N(6)-biotinyl-L-lysyl-[protein] + malonyl-CoA. It functions in the pathway lipid metabolism; malonyl-CoA biosynthesis; malonyl-CoA from acetyl-CoA: step 1/1. Its function is as follows. Component of the acetyl coenzyme A carboxylase (ACC) complex. Biotin carboxylase (BC) catalyzes the carboxylation of biotin on its carrier protein (BCCP) and then the CO(2) group is transferred by the transcarboxylase to acetyl-CoA to form malonyl-CoA. The protein is Acetyl-coenzyme A carboxylase carboxyl transferase subunit beta 1 of Vibrio campbellii (strain ATCC BAA-1116).